We begin with the raw amino-acid sequence, 434 residues long: Forkhead box protein A2-A (434 aa).

Positions 149 to 243 (KPPYSYISLI…ENGCYLRRQK (95 aa)) form a DNA-binding region, fork-head. The span at 249–262 (KKPSLREGGGKKLS) shows a compositional bias: basic and acidic residues. Disordered regions lie at residues 249 to 339 (KKPS…QSHL) and 408 to 434 (SGLE…MNSS). 2 stretches are compositionally biased toward low complexity: residues 263-291 (EGAS…SSSP) and 317-333 (ASQA…VLSH). Residues 408–422 (SGLESSPITSDTSYY) show a composition bias toward polar residues.

As to expression, at gastrula stage, expressed in both the anterior and posterior endoderm, with endodermal expression persisting into early tailbud stages. Expression is absent in gastrula stage ectoderm. During tailbud stages, expressed in the pharyngeal region, the neural floor plate, the midbrain, hindbrain and in cranial neural crest cells. Expressed in the foregut of hatching larvae. In tadpoles, expressed in the pharyngeal pouches and in other anterior endodermal regions. Within the tadpole nervous system, expressed in the neural floor plate, at high levels in the ventral midbrain and hindbrain, and at lower levels in the spinal cord. Expressed in the adult lung and brain.

The protein localises to the nucleus. Functionally, acts as a transcriptional activator during early development, limiting the extent of mesoderm formation in the gastrula. Binds to DNA via the target sequence 5'-GT[AC]AACA-3', with 5'-GTAAACA-3' being the preferred binding site. The chain is Forkhead box protein A2-A (foxa2-a) from Xenopus laevis (African clawed frog).